The following is a 459-amino-acid chain: DNA polymerase subunit gamma-2 (459 aa).

As to quaternary structure, heterotrimer composed of a catalytic subunit and a homodimer of accessory subunits (POLG:POLG2).

The protein resides in the mitochondrion. It is found in the mitochondrion matrix. Its subcellular location is the mitochondrion nucleoid. Functionally, accessory subunit of DNA polymerase gamma solely responsible for replication of mitochondrial DNA (mtDNA). Acts as an allosteric regulator of the holoenzyme activities. Enhances the polymerase activity and the processivity of POLG by increasing its interactions with the DNA template. Suppresses POLG exonucleolytic proofreading especially toward homopolymeric templates bearing mismatched termini. Binds to single-stranded DNA. The polypeptide is DNA polymerase subunit gamma-2 (Polg2) (Mus musculus (Mouse)).